We begin with the raw amino-acid sequence, 236 residues long: MSYNLTDPYEIARFIKESKKSTPVKVYVNGDLSEALMDDIEWYGANGFYILIGESDLVAKIILDNKHLIKHFRLENDRRNSAIPMLDLLEVEARIEPGAIIRDKVTIGKNAVVMMGAVINIGAEIGDGTMVDMNAVIGARGKLGKNVHLGAGAVVAGVLEPPSKEPCTVGDNVLIGANSVILEGVKIGAGSVVAAGSVVAEDVPEGVVVAGSPAKIIKSVDDKTKGKTQLLDDLRK.

This sequence belongs to the transferase hexapeptide repeat family. DapH subfamily.

It carries out the reaction (S)-2,3,4,5-tetrahydrodipicolinate + acetyl-CoA + H2O = L-2-acetamido-6-oxoheptanedioate + CoA. It functions in the pathway amino-acid biosynthesis; L-lysine biosynthesis via DAP pathway; LL-2,6-diaminopimelate from (S)-tetrahydrodipicolinate (acetylase route): step 1/3. Catalyzes the transfer of an acetyl group from acetyl-CoA to tetrahydrodipicolinate. The protein is 2,3,4,5-tetrahydropyridine-2,6-dicarboxylate N-acetyltransferase of Clostridium botulinum (strain Alaska E43 / Type E3).